A 386-amino-acid polypeptide reads, in one-letter code: Ferrochelatase (386 aa).

The Fe cation site is built by His-196 and Glu-277.

The protein belongs to the ferrochelatase family.

It localises to the cytoplasm. The enzyme catalyses heme b + 2 H(+) = protoporphyrin IX + Fe(2+). It participates in porphyrin-containing compound metabolism; protoheme biosynthesis; protoheme from protoporphyrin-IX: step 1/1. Functionally, catalyzes the ferrous insertion into protoporphyrin IX. In Picosynechococcus sp. (strain ATCC 27264 / PCC 7002 / PR-6) (Agmenellum quadruplicatum), this protein is Ferrochelatase.